Reading from the N-terminus, the 1004-residue chain is Liprin-beta homolog (1004 aa).

Composition is skewed to low complexity over residues 50–63 (NGNSTSRSTTTIGS) and 149–161 (SPPSDLPTSSSSL). Disordered stretches follow at residues 50–122 (NGNS…RSSR) and 135–161 (HRTDLGSDGSSGVESPPSDLPTSSSSL). Coiled coils occupy residues 280–328 (CQEL…VNQS) and 364–396 (DEMSQLRTAVQRLMADNEHKSLQINTLRNALDE). 4 disordered regions span residues 341–366 (HTNGHSSGGYMSPLREHRSEKNDDEM), 432–497 (PSDS…GGNQ), 528–550 (NGNEGANHNYSSASLPRGVGKAS), and 648–686 (FSKLTRSTSQDQSNSFRRGSAARSTSTARLGSTNHLGTV). The segment covering 434–453 (DSMSHSTSFPVSLSSTTSNG) has biased composition (polar residues). Over residues 458 to 474 (STVQSSSSYNSSLSAVS) the composition is skewed to low complexity. Polar residues-rich tracts occupy residues 531–541 (EGANHNYSSAS) and 648–684 (FSKLTRSTSQDQSNSFRRGSAARSTSTARLGSTNHLG). 3 consecutive SAM domains span residues 698–762 (WRSE…IEED), 770–833 (WDVH…LKKA), and 858–930 (VVRW…LLGP).

It belongs to the liprin family. Liprin-beta subfamily. Expressed in pharyngeal muscle, particularly posterior bulb, adjacent to the dorsal and ventral cord (but not in ventral cord neurons), and in body wall muscles.

Functionally, involved in the regulation of synaptic function at neuromuscular junctions. Together with the liprin-alpha protein syd-2, may play a role in regulating the structure of the neuronal region, called the active zone, from which synaptic vesicles send neurotransmitter signals across the synapse. Does not seem to be required for neuronal development. May regulate the disassembly of focal adhesions. Does not bind receptor-like tyrosine phosphatases type 2A. This Caenorhabditis elegans protein is Liprin-beta homolog.